A 237-amino-acid polypeptide reads, in one-letter code: 2-C-methyl-D-erythritol 4-phosphate cytidylyltransferase (237 aa).

This sequence belongs to the IspD/TarI cytidylyltransferase family. IspD subfamily.

It catalyses the reaction 2-C-methyl-D-erythritol 4-phosphate + CTP + H(+) = 4-CDP-2-C-methyl-D-erythritol + diphosphate. It functions in the pathway isoprenoid biosynthesis; isopentenyl diphosphate biosynthesis via DXP pathway; isopentenyl diphosphate from 1-deoxy-D-xylulose 5-phosphate: step 2/6. Its function is as follows. Catalyzes the formation of 4-diphosphocytidyl-2-C-methyl-D-erythritol from CTP and 2-C-methyl-D-erythritol 4-phosphate (MEP). This is 2-C-methyl-D-erythritol 4-phosphate cytidylyltransferase from Vibrio vulnificus (strain YJ016).